The primary structure comprises 484 residues: 1,3-beta-glucanosyltransferase GAS5 (484 aa).

Residues 1–19 (MLLRSLTSAFVLSAGLAQA) form the signal peptide. Asn24 and Asn60 each carry an N-linked (GlcNAc...) asparagine glycan. Cys71 and Cys100 are oxidised to a cystine. The (1,3-beta-D-glucosyl)n site is built by Tyr89, Asn159, and Glu160. Glu160 (proton donor) is an active-site residue. Asn166 carries N-linked (GlcNAc...) asparagine glycosylation. (1,3-beta-D-glucosyl)n contacts are provided by Asp201 and Arg206. Disulfide bonds link Cys215-Cys348 and Cys234-Cys265. The active-site Nucleophile is Glu262. Tyr295 provides a ligand contact to (1,3-beta-D-glucosyl)n. N-linked (GlcNAc...) asparagine glycosylation is found at Asn299, Asn344, and Asn359. The tract at residues 383-462 (TGIATQQSCD…SSQSSSKSKG (80 aa)) is disordered. The segment covering 394 to 404 (KDDDDEEDDDT) has biased composition (acidic residues). Residues 405–462 (SSSSSSSSSSSSSASSSSESSSSTSKASSSSPSASETSLLKSAASATSSSQSSSKSKG) are compositionally biased toward low complexity. The GPI-anchor amidated glycine moiety is linked to residue Gly462. Positions 463 to 484 (AAGIIEIPLIFRALAELYNLVL) are cleaved as a propeptide — removed in mature form.

It belongs to the glycosyl hydrolase 72 family. In terms of processing, the GPI-anchor is attached to the protein in the endoplasmic reticulum and serves to target the protein to the cell surface. There, the glucosamine-inositol phospholipid moiety is cleaved off and the GPI-modified mannoprotein is covalently attached via its lipidless GPI glycan remnant to the 1,6-beta-glucan of the outer cell wall layer.

The protein localises to the secreted. The protein resides in the cell wall. Its subcellular location is the membrane. Its function is as follows. Splits internally a 1,3-beta-glucan molecule and transfers the newly generated reducing end (the donor) to the non-reducing end of another 1,3-beta-glucan molecule (the acceptor) forming a 1,3-beta linkage, resulting in the elongation of 1,3-beta-glucan chains in the cell wall. Involved in cell wall biosynthesis and morphogenesis. The chain is 1,3-beta-glucanosyltransferase GAS5 (GAS5) from Saccharomyces cerevisiae (strain ATCC 204508 / S288c) (Baker's yeast).